A 439-amino-acid polypeptide reads, in one-letter code: Guanine deaminase (439 aa).

2 residues coordinate Zn(2+): His82 and His84. Residues 84–87 (HYPQ), 209–210 (RF), 237–240 (HLCE), and Asp327 contribute to the substrate site. Residues His237 and Asp327 each coordinate Zn(2+).

The protein belongs to the metallo-dependent hydrolases superfamily. ATZ/TRZ family. The cofactor is Zn(2+).

The enzyme catalyses guanine + H2O + H(+) = xanthine + NH4(+). It functions in the pathway purine metabolism; guanine degradation; xanthine from guanine: step 1/1. In terms of biological role, catalyzes the hydrolytic deamination of guanine, producing xanthine and ammonia. This chain is Guanine deaminase (guaD), found in Escherichia coli (strain K12).